A 51-amino-acid chain; its full sequence is Insulin (51 aa).

3 disulfide bridges follow: C7–C37, C19–C50, and C36–C41.

It belongs to the insulin family. In terms of assembly, heterodimer of a B chain and an A chain linked by two disulfide bonds.

The protein resides in the secreted. Functionally, insulin decreases blood glucose concentration. It increases cell permeability to monosaccharides, amino acids and fatty acids. It accelerates glycolysis, the pentose phosphate cycle, and glycogen synthesis in liver. The chain is Insulin (INS) from Didelphis virginiana (North American opossum).